The primary structure comprises 825 residues: Probable ATP-dependent RNA helicase DDX20 (825 aa).

The tract at residues 27–50 is disordered; that stretch reads PVQAVEPTPASPWTQRTAHDIGGP. Residues 63–91 carry the Q motif motif; it reads ADFESLLLSRPVLEGLRAAGFERPSPVQL. ATP contacts are provided by residues Arg-85, Gln-90, 107–114, and 110–115; these read AKSGTGKT and GTGKTC. One can recognise a Helicase ATP-binding domain in the interval 94 to 265; it reads IPLGRCGLDL…TRYMRDPTFV (172 aa). Ser-188 bears the Phosphoserine mark. A DEAD box motif is present at residues 212–215; sequence DEAD. Phosphoserine is present on Ser-270. A Helicase C-terminal domain is found at 300–449; that stretch reads HLQELFSKVP…PIPPGLMEEC (150 aa). Composition is skewed to polar residues over residues 465–475 and 484–504; these read SPTVATQSPKK and FQSQ…SASA. 2 disordered regions span residues 465-573 and 642-753; these read SPTV…PGSL and QMLV…EPQE. 3 positions are modified to phosphoserine: Ser-472, Ser-501, and Ser-506. Over residues 508–518 the composition is skewed to basic residues; sequence RPKHSKPKLPV. Over residues 547-571 the composition is skewed to polar residues; it reads KNSVQTSVEDSSSNSQHQAKDSSPG. Position 552 is a phosphothreonine (Thr-552). Phosphoserine is present on residues Ser-561, Ser-653, Ser-655, Ser-657, Ser-673, Ser-678, and Ser-679. Residues 646–668 show a composition bias toward low complexity; the sequence is SSSQSGDSESDSDSCSSRTSSQS. Residues Thr-689 and Thr-706 each carry the phosphothreonine modification. Polar residues predominate over residues 698–711; the sequence is EQVQNGNDTPTQVE. The span at 733–744 shows a compositional bias: basic residues; sequence KQSRRNPARRSS.

It belongs to the DEAD box helicase family. DDX20 subfamily. In terms of assembly, part of the core SMN complex that contains SMN1, GEMIN2/SIP1, DDX20/GEMIN3, GEMIN4, GEMIN5, GEMIN6, GEMIN7, GEMIN8 and STRAP/UNRIP. Part of the SMN-Sm complex that contains SMN1, GEMIN2/SIP1, DDX20/GEMIN3, GEMIN4, GEMIN5, GEMIN6, GEMIN7, GEMIN8, STRAP/UNRIP and the Sm proteins SNRPB, SNRPD1, SNRPD2, SNRPD3, SNRPE, SNRPF and SNRPG. Interacts with SMN1; the interaction is direct. Interacts with GEMIN4; the interaction is direct. Interacts with GEMIN5. Interacts with SNUPN; the interaction is direct. Interacts with PPP4R2. Interacts with FOXL2. Interacts with NANOS1 and PUM2.

It localises to the cytoplasm. The protein localises to the nucleus. It is found in the gem. It catalyses the reaction ATP + H2O = ADP + phosphate + H(+). It carries out the reaction a ribonucleoside 5'-triphosphate + H2O = a ribonucleoside 5'-diphosphate + phosphate + H(+). Its function is as follows. The SMN complex catalyzes the assembly of small nuclear ribonucleoproteins (snRNPs), the building blocks of the spliceosome, and thereby plays an important role in the splicing of cellular pre-mRNAs. Most spliceosomal snRNPs contain a common set of Sm proteins SNRPB, SNRPD1, SNRPD2, SNRPD3, SNRPE, SNRPF and SNRPG that assemble in a heptameric protein ring on the Sm site of the small nuclear RNA to form the core snRNP (Sm core). In the cytosol, the Sm proteins SNRPD1, SNRPD2, SNRPE, SNRPF and SNRPG are trapped in an inactive 6S pICln-Sm complex by the chaperone CLNS1A that controls the assembly of the core snRNP. To assemble core snRNPs, the SMN complex accepts the trapped 5Sm proteins from CLNS1A forming an intermediate. Binding of snRNA inside 5Sm triggers eviction of the SMN complex, thereby allowing binding of SNRPD3 and SNRPB to complete assembly of the core snRNP. May also play a role in the metabolism of small nucleolar ribonucleoprotein (snoRNPs). This Mus musculus (Mouse) protein is Probable ATP-dependent RNA helicase DDX20 (Ddx20).